Reading from the N-terminus, the 366-residue chain is Succinyl-diaminopimelate desuccinylase (366 aa).

Residue His66 coordinates Zn(2+). The active site involves Asp68. Asp97 is a binding site for Zn(2+). Glu127 (proton acceptor) is an active-site residue. Glu128, Glu156, and His341 together coordinate Zn(2+).

The protein belongs to the peptidase M20A family. DapE subfamily. In terms of assembly, homodimer. Zn(2+) serves as cofactor. Requires Co(2+) as cofactor.

The enzyme catalyses N-succinyl-(2S,6S)-2,6-diaminopimelate + H2O = (2S,6S)-2,6-diaminopimelate + succinate. It functions in the pathway amino-acid biosynthesis; L-lysine biosynthesis via DAP pathway; LL-2,6-diaminopimelate from (S)-tetrahydrodipicolinate (succinylase route): step 3/3. In terms of biological role, catalyzes the hydrolysis of N-succinyl-L,L-diaminopimelic acid (SDAP), forming succinate and LL-2,6-diaminopimelate (DAP), an intermediate involved in the bacterial biosynthesis of lysine and meso-diaminopimelic acid, an essential component of bacterial cell walls. This Aliarcobacter butzleri (strain RM4018) (Arcobacter butzleri) protein is Succinyl-diaminopimelate desuccinylase.